The sequence spans 239 residues: Transmembrane emp24 domain-containing protein 6 (239 aa).

A signal peptide spans 1–21 (MFPLLLVAELVVLSLVTSVKS). Over 22–200 (QETDPLHGSK…FFLLQSNYTY (179 aa)) the chain is Lumenal. The GOLD domain occupies 53–138 (IECFWQFADQ…SIQVYLNFGV (86 aa)). N-linked (GlcNAc...) asparagine glycans are attached at residues Asn156 and Asn197. The helical transmembrane segment at 201-223 (VNWWSTAQSLAIVLSGALQLYFL) threads the bilayer. The Cytoplasmic segment spans residues 224-239 (KRLFTASTTDTKKPRC).

Belongs to the EMP24/GP25L family.

It is found in the endoplasmic reticulum membrane. The sequence is that of Transmembrane emp24 domain-containing protein 6 (Tmed6) from Mus musculus (Mouse).